The primary structure comprises 180 residues: Napin (180 aa).

The first 21 residues, 1 to 21, serve as a signal peptide directing secretion; that stretch reads MANKLFLVSATLAFFFLLTNA. 2 consecutive propeptides follow at residues 22–38 and 75–94; these read SIYR…ATNP and PSWT…NPQG.

Belongs to the 2S seed storage albumins family. The mature protein consists of a small and a large chain linked by disulfide bonds. As to expression, cotyledons and the axis.

In terms of biological role, the small, basic, water-soluble napins are one of the two major kinds of storage proteins synthesized in the seed during its maturation. The protein is Napin (NAP1) of Brassica napus (Rape).